Consider the following 467-residue polypeptide: AT-rich interactive domain-containing protein cfi-1 (467 aa).

The segment at 1–56 (MSVRIDEPQLFVSMSKEPTQETVNVGGHHDDSSSNCDERVDDQTEEQKSPPASPDL) is disordered. The segment covering 27–48 (GHHDDSSSNCDERVDDQTEEQK) has biased composition (basic and acidic residues). Positions 181–273 (DVKRKEWLDD…YLYDYECEKE (93 aa)) constitute an ARID domain. An REKLES domain is found at 356–464 (AILEAHQRNL…GVLFALDETV (109 aa)). A disordered region spans residues 383–441 (LTACSNGNGGNIHNSGRESTSSNDSDIPAKRPKLENDVKTNGASSMRISTKHSDNSKTS). Residues 409 to 420 (IPAKRPKLENDV) show a composition bias toward basic and acidic residues. Polar residues predominate over residues 421-430 (KTNGASSMRI).

As to expression, present in IL2 and URA neurons, and in AVD and PVC interneurons. Present in muscles from head and pharynx (at protein level).

It localises to the nucleus. Functionally, transcription factor. Regulates neuronal subtype identity. Involved in motor neuron fate determination and maintenance, acting as a transcriptional repressor to counteract gene activation by transcription factor unc-3 in a subset of motor neurons. Probably acts by binding to specific promoter elements. Promotes differentiation of URA sensory neurons and prevents them from expressing male-specific CEM neuronal features. Promotes differentiation of AVD and PVC interneurons and their glutamate receptor expression. The protein is AT-rich interactive domain-containing protein cfi-1 (cfi-1) of Caenorhabditis elegans.